Consider the following 115-residue polypeptide: Large ribosomal subunit protein bL19 (115 aa).

It belongs to the bacterial ribosomal protein bL19 family.

Its function is as follows. This protein is located at the 30S-50S ribosomal subunit interface and may play a role in the structure and function of the aminoacyl-tRNA binding site. This is Large ribosomal subunit protein bL19 from Desulforamulus reducens (strain ATCC BAA-1160 / DSM 100696 / MI-1) (Desulfotomaculum reducens).